A 205-amino-acid chain; its full sequence is uncharacterized protein (205 aa).

The next 4 helical transmembrane spans lie at 18-38, 69-89, 106-126, and 127-147; these read ATVN…GTIG, LGIF…CFYA, VVWI…YYIM, and LLHP…LFLI.

The protein resides in the mitochondrion membrane. This is an uncharacterized protein from Arabidopsis thaliana (Mouse-ear cress).